The primary structure comprises 107 residues: Auxin-responsive protein SAUR50 (107 aa).

Belongs to the ARG7 family. As to quaternary structure, interacts with BZR1. As to expression, expressed in cotyledons, leaves, flowers and siliques.

It is found in the cell membrane. Its function is as follows. Provide a mechanistic link between auxin and plasma membrane H(+)-ATPases (PM H(+)-ATPases, e.g. AHA1 and AHA2), and triggers PM H(+)-ATPases activity by promoting phosphorylation of their C-terminal autoinhibitory domain as a result of PP2C-D subfamily of type 2C phosphatases inhibition, thus leading to the acidification of the apoplast and the facilitation of solutes and water uptake to drive cell expansion. Triggers plant growth probably by promoting cell elongation. Regulates branch angles and bending. Effector of hormonal and environmental signals in plant growth. The polypeptide is Auxin-responsive protein SAUR50 (Arabidopsis thaliana (Mouse-ear cress)).